A 130-amino-acid chain; its full sequence is Small ribosomal subunit protein uS11 (130 aa).

This sequence belongs to the universal ribosomal protein uS11 family. In terms of assembly, part of the 30S ribosomal subunit. Interacts with proteins S7 and S18. Binds to IF-3.

Located on the platform of the 30S subunit, it bridges several disparate RNA helices of the 16S rRNA. Forms part of the Shine-Dalgarno cleft in the 70S ribosome. This chain is Small ribosomal subunit protein uS11, found in Campylobacter lari (strain RM2100 / D67 / ATCC BAA-1060).